A 699-amino-acid chain; its full sequence is UV radiation resistance-associated gene protein (699 aa).

Positions Met1–Pro10 are enriched in low complexity. The interval Met1–Pro24 is disordered. The 127-residue stretch at Pro23–Asn149 folds into the C2 domain. A sufficient for interaction with STX7; VTI1B AND STX8 region spans residues His200–Gln269. A coiled-coil region spans residues Leu224–Glu305. The tract at residues Ile270–Leu442 is sufficient for interaction with VPS16, required for interaction with CEP63. Positions Gly443–Lys699 are required for interaction with PRKDC, XRCC6 and XRCC5. Residues Gly486–Gly591 form a disordered region. A Phosphoserine modification is found at Ser493. Ser498 is modified (phosphoserine; by MTOR). Ser508 is subject to Phosphoserine. Thr518 is subject to Phosphothreonine. Ser522 is modified (phosphoserine). The segment covering Tyr523–Pro535 has biased composition (polar residues). Over residues Thr545–Asp556 the composition is skewed to low complexity. 2 positions are modified to phosphoserine: Ser549 and Ser550. Over residues Phe557–Asp567 the composition is skewed to basic and acidic residues. Phosphoserine is present on residues Ser571, Ser582, and Ser689.

Component of the PI3K (PI3KC3/PI3K-III/class III phosphatidylinositol 3-kinase) complex II (PI3KC3-C2) in which the core composed of the catalytic subunit PIK3C3, the regulatory subunit PIK3R4 and BECN1 is associated with UVRAG; in the complex interacts directly with BECN1. PI3KC3-C2 can associate with further regulatory subunits such as RUBCN and probably SH3GLB1/Bif-1. Interacts with SH3GLB1; UVRAG bridges the interaction to BECN1 indicative for an association with the PI3K complex PI3KC3-C2. Interacts with RINT1. Associates with the NRZ complex under basal conditions and dissociates from it under autophagy conditions to associate with the PI3K complex; these complex associations seem to be mutually exclusive. Interacts with VPS16; VPS11; VPS18; VPS33 (VPS33A or VPS33B) and VPS39; indicative for an association with a class C Vps tethering complex (possibly the HOPS complex). Interacts with RAB7A; RAB7A competes with UVRAG for RUBCN binding. Interacts with STX7, VTI1B, STX8. Interacts with PRKDC, XRCC6 and XRCC5; indicative for an association with the DNA-dependent protein kinase complex DNA-PK. Interacts with CEP63. Directly interacts with FEZ1 and SCOC; the interaction with SCOC is reduced by amino acid starvation, but the complex is stabilized in the presence of FEZ1. Interacts with BECN1P1/BECN2. Interacts with SLAMF1. Interacts with RUBCNL/PACER; promoting targeting of UVRAG to autophagosome. Interacts with WNK1. Post-translationally, phosphorylated at Ser-498 by MTOR under basal conditions; increases the interaction with RUBCN implicated in inhibitory effect of RUBCN on PI3KC3 and decreases interaction with RAB7,A and VPS16 and VPS39 (indicative for a class C Vps complex, possibly the HOPS complex). Highly expressed in brain, lung, kidney and liver.

It localises to the late endosome. The protein resides in the lysosome. It is found in the cytoplasmic vesicle. Its subcellular location is the autophagosome. The protein localises to the early endosome. It localises to the endoplasmic reticulum. The protein resides in the midbody. It is found in the chromosome. Its subcellular location is the centromere. Versatile protein that is involved in regulation of different cellular pathways implicated in membrane trafficking. Involved in regulation of the COPI-dependent retrograde transport from Golgi and the endoplasmic reticulum by associating with the NRZ complex; the function is dependent on its binding to phosphatidylinositol 3-phosphate (PtdIns(3)P). During autophagy acts as a regulatory subunit of the alternative PI3K complex II (PI3KC3-C2) that mediates formation of phosphatidylinositol 3-phosphate and is believed to be involved in maturation of autophagosomes and endocytosis. Activates lipid kinase activity of PIK3C3. Involved in the regulation of degradative endocytic trafficking and cytokinesis, and in regulation of ATG9A transport from the Golgi to the autophagosome; the functions seems to implicate its association with PI3KC3-C2. Involved in maturation of autophagosomes and degradative endocytic trafficking independently of BECN1 but depending on its association with a class C Vps complex (possibly the HOPS complex); the association is also proposed to promote autophagosome recruitment and activation of Rab7 and endosome-endosome fusion events. Enhances class C Vps complex (possibly HOPS complex) association with a SNARE complex and promotes fusogenic SNARE complex formation during late endocytic membrane fusion. In case of negative-strand RNA virus infection is required for efficient virus entry, promotes endocytic transport of virions and is implicated in a VAMP8-specific fusogenic SNARE complex assembly. Its function is as follows. Involved in maintaining chromosomal stability. Promotes DNA double-strand break (DSB) repair by association with DNA-dependent protein kinase complex DNA-PK and activating it in non-homologous end joining (NHEJ). Required for centrosome stability and proper chromosome segregation. This Homo sapiens (Human) protein is UV radiation resistance-associated gene protein (UVRAG).